Reading from the N-terminus, the 190-residue chain is Large ribosomal subunit protein bL25 (190 aa).

Belongs to the bacterial ribosomal protein bL25 family. CTC subfamily. In terms of assembly, part of the 50S ribosomal subunit; part of the 5S rRNA/L5/L18/L25 subcomplex. Contacts the 5S rRNA. Binds to the 5S rRNA independently of L5 and L18.

This is one of the proteins that binds to the 5S RNA in the ribosome where it forms part of the central protuberance. In Neisseria meningitidis serogroup C (strain 053442), this protein is Large ribosomal subunit protein bL25.